A 339-amino-acid chain; its full sequence is uncharacterized protein (339 aa).

Residues 1–12 are compositionally biased toward polar residues; that stretch reads MDIDLNNQTDNN. A disordered region spans residues 1–30; the sequence is MDIDLNNQTDNNELIVEDTENPKNPNSTNI.

This is an uncharacterized protein from Acanthamoeba polyphaga (Amoeba).